Consider the following 331-residue polypeptide: Heme A synthase (331 aa).

The next 8 membrane-spanning stretches (helical) occupy residues 6–26 (VAIWLFLCSLMVICMVGIGGF), 87–107 (YVHRLIARLTGLVFILPFIYF), 124–144 (ALLFGILQAFAGWYMVKSGLV), 154–174 (LALHLLLALVIFALLSYQFFD), 193–213 (IWIILILVTVQIIFGAFVAGL), 251–271 (VQFIHRALALLILVLTAILTI), 279–299 (LYVMLFSVIIQVILGIVTLLL), and 301–321 (IPMAIAIAHQMFSFILFGSGL). Histidine 255 is a binding site for heme. Histidine 309 contacts heme.

This sequence belongs to the COX15/CtaA family. Type 2 subfamily. In terms of assembly, interacts with CtaB. The cofactor is heme b.

It is found in the cell membrane. The enzyme catalyses Fe(II)-heme o + 2 A + H2O = Fe(II)-heme a + 2 AH2. Its pathway is porphyrin-containing compound metabolism; heme A biosynthesis; heme A from heme O: step 1/1. In terms of biological role, catalyzes the conversion of heme O to heme A by two successive hydroxylations of the methyl group at C8. The first hydroxylation forms heme I, the second hydroxylation results in an unstable dihydroxymethyl group, which spontaneously dehydrates, resulting in the formyl group of heme A. The protein is Heme A synthase of Wolbachia pipientis subsp. Culex pipiens (strain wPip).